Here is a 736-residue protein sequence, read N- to C-terminus: Subtilisin-like protease SBT4.6 (736 aa).

An N-terminal signal peptide occupies residues 1–24; that stretch reads MATAVSYCLLSCIFALLVVSFASA. Positions 25 to 111 are cleaved as a propeptide — activation peptide; it reads GKDDQDKQVY…VFPSKNLNLQ (87 aa). The region spanning 33–110 is the Inhibitor I9 domain; that stretch reads VYIVYMGALP…SVFPSKNLNL (78 aa). The Peptidase S8 domain maps to 115–589; the sequence is SWNFMGLKEG…AGHVDPIAAI (475 aa). Asp143 acts as the Charge relay system in catalysis. A glycan (N-linked (GlcNAc...) asparagine) is linked at Asn174. The active-site Charge relay system is His204. Asn227 is a glycosylation site (N-linked (GlcNAc...) asparagine). The PA domain occupies 362–442; sequence KYPLVYGKSA…PVSVLSEDDY (81 aa). Asn450 carries an N-linked (GlcNAc...) asparagine glycan. The active-site Charge relay system is Ser527. N-linked (GlcNAc...) asparagine glycosylation is found at Asn564, Asn598, Asn610, and Asn668.

Belongs to the peptidase S8 family. In terms of processing, the C-terminal propeptide is autocleaved.

The protein resides in the secreted. In Arabidopsis thaliana (Mouse-ear cress), this protein is Subtilisin-like protease SBT4.6.